Reading from the N-terminus, the 301-residue chain is Transcription elongation factor A protein 1 (301 aa).

Methionine 1 is modified (N-acetylmethionine). Residues aspartate 3–proline 80 form the TFIIS N-terminal domain. A Glycyl lysine isopeptide (Lys-Gly) (interchain with G-Cter in ubiquitin) cross-link involves residue lysine 55. Phosphoserine is present on residues serine 57, serine 81, serine 97, and serine 100. Residues leucine 76–proline 93 show a composition bias toward basic and acidic residues. Residues leucine 76–serine 139 are disordered. In terms of domain architecture, TFIIS central spans valine 140–threonine 256. Residues aspartate 259–lysine 299 form a TFIIS-type zinc finger. Positions 263, 266, 291, and 294 each coordinate Zn(2+).

The protein belongs to the TFS-II family. As to quaternary structure, interacts with EAF2. Associates with UBR5 and forms a transcription regulatory complex made of CDK9, Pol II, UBR5 and TCEA1/TFIIS. Part of TBP-based Pol II pre-initiation complex (PIC), in which Pol II core assembles with general transcription factors and other specific initiation factors including GTF2E1, GTF2E2, GTF2F1, GTF2F2, TCEA1, ERCC2, ERCC3, GTF2H2, GTF2H3, GTF2H4, GTF2H5, GTF2A1, GTF2A2, GTF2B and TBP; this large multi-subunit PIC complex mediates DNA unwinding and targets Pol II core to the transcription start site where the first phosphodiester bond forms.

The protein localises to the nucleus. Functionally, necessary for efficient RNA polymerase II transcription elongation past template-encoded arresting sites. The arresting sites in DNA have the property of trapping a certain fraction of elongating RNA polymerases that pass through, resulting in locked ternary complexes. Cleavage of the nascent transcript by S-II allows the resumption of elongation from the new 3'-terminus. In Mus musculus (Mouse), this protein is Transcription elongation factor A protein 1 (Tcea1).